The primary structure comprises 787 residues: Formate acetyltransferase (787 aa).

The PFL domain occupies 8-629; it reads NIFEQAWDGF…GNSPVHKGVF (622 aa). Cys416 (S-acetylcysteine intermediate) is an active-site residue. The active-site Cysteine radical intermediate is Cys417. Residues 645-774 enclose the Glycine radical domain; that stretch reads SPGANPSNKA…LTERVFHEVL (130 aa). Gly749 carries the glycine radical modification.

It belongs to the glycyl radical enzyme (GRE) family. PFL subfamily. Homodimer.

The protein resides in the cytoplasm. It carries out the reaction formate + acetyl-CoA = pyruvate + CoA. The protein operates within fermentation; pyruvate fermentation; formate from pyruvate: step 1/1. This is Formate acetyltransferase (pfl) from Lactococcus lactis subsp. cremoris (strain MG1363).